A 208-amino-acid polypeptide reads, in one-letter code: Small ribosomal subunit protein uS4 (208 aa).

The region spanning Arg98–Ala160 is the S4 RNA-binding domain.

It belongs to the universal ribosomal protein uS4 family. Part of the 30S ribosomal subunit. Contacts protein S5. The interaction surface between S4 and S5 is involved in control of translational fidelity.

In terms of biological role, one of the primary rRNA binding proteins, it binds directly to 16S rRNA where it nucleates assembly of the body of the 30S subunit. Its function is as follows. With S5 and S12 plays an important role in translational accuracy. This is Small ribosomal subunit protein uS4 from Syntrophobacter fumaroxidans (strain DSM 10017 / MPOB).